The chain runs to 358 residues: UDP-N-acetylglucosamine--N-acetylmuramyl-(pentapeptide) pyrophosphoryl-undecaprenol N-acetylglucosamine transferase (358 aa).

Residues Ser-197 and Gln-288 each contribute to the UDP-N-acetyl-alpha-D-glucosamine site.

It belongs to the glycosyltransferase 28 family. MurG subfamily.

It is found in the cell membrane. The enzyme catalyses Mur2Ac(oyl-L-Ala-gamma-D-Glu-L-Lys-D-Ala-D-Ala)-di-trans,octa-cis-undecaprenyl diphosphate + UDP-N-acetyl-alpha-D-glucosamine = beta-D-GlcNAc-(1-&gt;4)-Mur2Ac(oyl-L-Ala-gamma-D-Glu-L-Lys-D-Ala-D-Ala)-di-trans,octa-cis-undecaprenyl diphosphate + UDP + H(+). It participates in cell wall biogenesis; peptidoglycan biosynthesis. Functionally, cell wall formation. Catalyzes the transfer of a GlcNAc subunit on undecaprenyl-pyrophosphoryl-MurNAc-pentapeptide (lipid intermediate I) to form undecaprenyl-pyrophosphoryl-MurNAc-(pentapeptide)GlcNAc (lipid intermediate II). The polypeptide is UDP-N-acetylglucosamine--N-acetylmuramyl-(pentapeptide) pyrophosphoryl-undecaprenol N-acetylglucosamine transferase (Streptococcus agalactiae serotype Ia (strain ATCC 27591 / A909 / CDC SS700)).